The following is a 112-amino-acid chain: Probable head completion protein 2 (112 aa).

It belongs to the skunalikevirus head completion protein 2 family.

It localises to the virion. In terms of biological role, probably functions as a stopper that is part of the head-tail connector and that locks the viral DNA in the capsid. During assembly, functions as a docking platform which the preassembled tail can bind to. Plays a role in morphogenesis of the virion capsid after genome packaging. The polypeptide is Probable head completion protein 2 (Lactococcus phage p2 (Lactococcus lactis bacteriophage p2)).